A 471-amino-acid polypeptide reads, in one-letter code: Glutamyl-tRNA(Gln) amidotransferase subunit A (471 aa).

Active-site charge relay system residues include Lys66 and Ser141. Ser165 acts as the Acyl-ester intermediate in catalysis.

Belongs to the amidase family. GatA subfamily. As to quaternary structure, heterotrimer of A, B and C subunits.

It catalyses the reaction L-glutamyl-tRNA(Gln) + L-glutamine + ATP + H2O = L-glutaminyl-tRNA(Gln) + L-glutamate + ADP + phosphate + H(+). Functionally, allows the formation of correctly charged Gln-tRNA(Gln) through the transamidation of misacylated Glu-tRNA(Gln) in organisms which lack glutaminyl-tRNA synthetase. The reaction takes place in the presence of glutamine and ATP through an activated gamma-phospho-Glu-tRNA(Gln). This chain is Glutamyl-tRNA(Gln) amidotransferase subunit A, found in Thermus thermophilus (strain ATCC BAA-163 / DSM 7039 / HB27).